Reading from the N-terminus, the 219-residue chain is Probable GTP-binding protein EngB (219 aa).

The region spanning 24–207 (VQPEIAFAGR…HELIESWLRP (184 aa)) is the EngB-type G domain. Residues 32-39 (GRSNAGKS), 59-63 (GRTQH), 81-84 (DLPG), 148-151 (TKCD), and 186-188 (FSA) contribute to the GTP site. Mg(2+) contacts are provided by Ser39 and Thr61.

Belongs to the TRAFAC class TrmE-Era-EngA-EngB-Septin-like GTPase superfamily. EngB GTPase family. It depends on Mg(2+) as a cofactor.

In terms of biological role, necessary for normal cell division and for the maintenance of normal septation. The chain is Probable GTP-binding protein EngB from Burkholderia vietnamiensis (strain G4 / LMG 22486) (Burkholderia cepacia (strain R1808)).